The following is a 489-amino-acid chain: Dipeptide and tripeptide permease B (489 aa).

Topologically, residues 1–27 are cytoplasmic; the sequence is MNKPASIGLLQQPKPFFMIFFVELWER. The chain crosses the membrane as a helical span at residues 28-48; sequence FGYYGVQGILAVYFVHKLGFS. At 49 to 52 the chain is on the periplasmic side; sequence QEQA. The helical transmembrane segment at 53 to 73 threads the bilayer; it reads FTTFGAFAALVYGLIAIGGYV. Over 74-82 the chain is Cytoplasmic; the sequence is GDHLLGTKR. A helical membrane pass occupies residues 83–103; sequence TIVLGAIVLTVGYFMTGLSIL. Over 104–106 the chain is Periplasmic; it reads KPE. The helical transmembrane segment at 107-127 threads the bilayer; sequence LIFYALGTIAVGNGLFKANPA. Residues 128-146 lie on the Cytoplasmic side of the membrane; it reads SLLSKCYPPKDPRLDGAFT. Residues 147–167 form a helical membrane-spanning segment; the sequence is LFYMSINIGSLFSLAIAPVIA. Residues 168-171 are Periplasmic-facing; that stretch reads EKFG. The helical transmembrane segment at 172–192 threads the bilayer; the sequence is YAVTYNICGIGLIIALLVYVL. Over 193 to 212 the chain is Cytoplasmic; that stretch reads YRNTVRNIGSEPDHRPINYK. Helical transmembrane passes span 213-233 and 234-254; these read NLLLVLAGTVTMVFVCAWLMH and NVKIANIVLIGLSVVIVFIFF. The Cytoplasmic segment spans residues 255 to 267; it reads REAFKQDKVGRNK. The helical transmembrane segment at 268–288 threads the bilayer; sequence MFVAFILMLQAIVFFILYAQM. At 289–311 the chain is on the periplasmic side; it reads PTSLNFFAINNVHHQLLGFNINP. A helical transmembrane segment spans residues 312 to 332; that stretch reads VSFQALNPFWIVVASPILAAL. Over 333-350 the chain is Cytoplasmic; the sequence is YTHWGSRSKDLTMPAKFT. The helical transmembrane segment at 351–371 threads the bilayer; that stretch reads VGMFLCSLGFLTAAAAGLWFA. Over 372-375 the chain is Periplasmic; sequence DEQG. Residues 376-396 form a helical membrane-spanning segment; that stretch reads LTSPWFIVLVYLFQSLGELMI. Over 397–419 the chain is Cytoplasmic; that stretch reads SALGLAMVAALVPQYLMGFILGM. A helical transmembrane segment spans residues 420 to 440; it reads WYLTQATSFLLGGYVAAFTAI. Residues 441–456 are Periplasmic-facing; that stretch reads PEGITDPLETLPVYTN. A helical transmembrane segment spans residues 457–477; that stretch reads VFGKIGITTFIVAIIMAITVP. The Cytoplasmic segment spans residues 478 to 489; the sequence is LLNRMMNGKQKA.

This sequence belongs to the major facilitator superfamily. Proton-dependent oligopeptide transporter (POT/PTR) (TC 2.A.17) family. DtpB subfamily.

The protein resides in the cell inner membrane. Its function is as follows. Proton-dependent permease that transports di- and tripeptides. The polypeptide is Dipeptide and tripeptide permease B (Photorhabdus asymbiotica subsp. asymbiotica (strain ATCC 43949 / 3105-77) (Xenorhabdus luminescens (strain 2))).